Reading from the N-terminus, the 325-residue chain is MDRTVQQTDYDALSCRMAAITRGYLPSQKQIEQCGYEGYTEVHVEYCNVLRRLSRRLYSRVQKACTTLLPVMNYGSFVRTVSVDVELHKYVAGFGGRAQVVNLGCGSDLRMCMLLERYPELHYVDVDFAETVKMKREVLMQSAELCRRIGASSTSPQEQDCVLHGPRYRLLAGDLRDTGALLELLQKHTDADLPTVVITECVLCYLPREAAQALIREVCGFYKSGSWISYDPIGGGQREDRFGSIMQSNLREFRQLELPTLMEFNSKEKYSARFPAPSNIQTMWEYYMTDISEDEKRKLKTLQFLDEVEELEILLSHYVILVTSW.

Residues arginine 79, glycine 104, aspartate 127, 174–175 (DL), and glutamate 200 contribute to the S-adenosyl-L-methionine site.

It belongs to the methyltransferase superfamily. LCMT family.

It catalyses the reaction [phosphatase 2A protein]-C-terminal L-leucine + S-adenosyl-L-methionine = [phosphatase 2A protein]-C-terminal L-leucine methyl ester + S-adenosyl-L-homocysteine. Its function is as follows. Methylates the carboxyl group of the C-terminal leucine residue of protein phosphatase 2A catalytic subunits to form alpha-leucine ester residues. The sequence is that of Leucine carboxyl methyltransferase 1 (PPM1) from Eremothecium gossypii (strain ATCC 10895 / CBS 109.51 / FGSC 9923 / NRRL Y-1056) (Yeast).